The chain runs to 60 residues: Bowman-Birk type proteinase inhibitor C1 (60 aa).

4 disulfide bridges follow: Cys-5–Cys-21, Cys-11–Cys-19, Cys-28–Cys-35, and Cys-32–Cys-49.

Belongs to the Bowman-Birk serine protease inhibitor family. In terms of tissue distribution, expressed in bulb (at protein level).

In terms of biological role, serine protease inhibitor. Strongly inhibits trypsin (Ki = 0.22 nM) and very weakly inhibits chymotrypsin (Ki = 1200 nM). Does not inhibit bacterial subtilisin. The sequence is that of Bowman-Birk type proteinase inhibitor C1 from Hyacinthus orientalis (Common hyacinth).